A 382-amino-acid chain; its full sequence is MFLKAVVLSLALVAVTGARAEVNADQVATVMWDYFSQLGSNAKKAVEHLQKSELTQQLNTLFQDKLGEVNTYTEDLQKKLVPFATELHERLTKDSEKLKEEIRRELEELRARLLPHATEVSQKIGDNVRELQQRLGPFTGGLRTQVNTQVQQLQRQLKPYAERMESVLRQNIRNLEASVAPYADEFKAKIDQNVEELKGSLTPYAEELKAKIDQNVEELRRSLAPYAQDVQEKLNHQLEGLAFQMKKQAEELKAKISANADELRQKLVPVAENVHGHLKGNTEGLQKSLLELRSHLDQQVEEFRLKVEPYGETFNKALVQQVEDLRQKLGPLAGDVEGHLSFLEKDLRDKVNTFFSTLKEEASQGQSQALPAQEKAQAPLEG.

The first 20 residues, 1-20 (MFLKAVVLSLALVAVTGARA), serve as a signal peptide directing secretion. Tandem repeats lie at residues 33 to 54 (DYFS…KSEL), 60 to 81 (TLFQ…KKLV), 82 to 103 (PFAT…EEIR), 115 to 136 (PHAT…QRLG), 137 to 158 (PFTG…RQLK), 159 to 180 (PYAE…ASVA), 181 to 202 (PYAD…GSLT), 203 to 224 (PYAE…RSLA), 225 to 246 (PYAQ…FQMK), 247 to 268 (KQAE…QKLV), 269 to 286 (PVAE…EGLQ), 287 to 308 (KSLL…LKVE), and 309 to 330 (PYGE…QKLG). Positions 33–330 (DYFSQLGSNA…QVEDLRQKLG (298 aa)) are 13 X 22 AA approximate tandem repeats. Residues 361-382 (EASQGQSQALPAQEKAQAPLEG) form a disordered region.

It belongs to the apolipoprotein A1/A4/E family. In terms of assembly, homodimer. Secreted in plasma.

It is found in the secreted. Functionally, may have a role in chylomicrons and VLDL secretion and catabolism. Required for efficient activation of lipoprotein lipase by ApoC-II; potent activator of LCAT. Apoa-IV is a major component of HDL and chylomicrons. This Sus scrofa (Pig) protein is Apolipoprotein A-IV (APOA4).